Consider the following 69-residue polypeptide: uncharacterized protein (69 aa).

This is an uncharacterized protein from Salmonella paratyphi A (strain ATCC 9150 / SARB42).